A 141-amino-acid chain; its full sequence is Ly6/PLAUR domain-containing protein 1 (141 aa).

Residues 1–20 (MWVLGIAATFCGLFWLPGLA) form the signal peptide. Cystine bridges form between Cys25/Cys54, Cys28/Cys37, Cys46/Cys71, Cys77/Cys100, Cys88/Cys97, and Cys101/Cys106. Positions 25–108 (CYQCEEFQLN…SCCNTPLCNG (84 aa)) constitute a UPAR/Ly6 domain. Residue Asn45 is glycosylated (N-linked (GlcNAc...) asparagine). A lipid anchor (GPI-anchor amidated glycine) is attached at Gly115. Residues 116-141 (SSASAIRPELFTTVLFFNLALCLAHC) constitute a propeptide, removed in mature form.

In terms of assembly, interacts with CHRNA4 and nAChRs containing alpha-4:beta-2 (CHRNA4:CHRNB2) and alpha-7 (CHRNA7) subunits.

The protein localises to the cell membrane. Functionally, believed to act as a modulator of nicotinic acetylcholine receptors (nAChRs) activity. In vitro increases receptor desensitization and decreases affinity for ACh of alpha-4:beta-2-containing nAChRs. May play a role in the intracellular trafficking of alpha-4:beta-2 and alpha-7-containing nAChRs and may inhibit their expression at the cell surface. May be involved in the control of anxiety. This Rattus norvegicus (Rat) protein is Ly6/PLAUR domain-containing protein 1 (Lypd1).